We begin with the raw amino-acid sequence, 182 residues long: uncharacterized protein (182 aa).

Transmembrane regions (helical) follow at residues 58–78 (ILFG…YVVY) and 81–101 (PVSI…IIIW).

To M.jannaschii MJ0803.

The protein localises to the cell membrane. This is an uncharacterized protein from Methanocaldococcus jannaschii (strain ATCC 43067 / DSM 2661 / JAL-1 / JCM 10045 / NBRC 100440) (Methanococcus jannaschii).